The following is a 1056-amino-acid chain: MGDPGPEIIESVPPAGPEASESTTDENEDDIQFVSEGPLRPVLEYIDLVSSDDEEPSTSHSDENFKCKDYIDHQKDKVALTLARLARHVEVEKQQKEEKNRAFREKIDFQHAHGLQELEFIQGHSETEAARQCVDQWLKMPGLRTNAANSGTKRSFQRGGRMWRSEKPILCPIMHCNKEFDNGHLLLGHLKRFDHSPCDPTITLHGPLANSFACAVCYEHFVTQQQYKDHLLSRTAAADGHSNSLLPQIIQCYACPQCFLLFSTKDECLKHMSTKNHFHQSFKLSDNKGTARPISFPSFAKKRLVSLCKDVPFQVKCVACHQTLRSHMELTAHFRVRCQNAGPVAIAEKSITQVAKEFIVRGYCSDCNQVFMDVASTQSHKNSGHKITLANSVEESVLLYCHISEGSRPPCDLHLFSQPKISSLKRILSVKESSAEDCIVPTKKVNLGVESLGGATRVQRQSPAVTAWFCECRRQFPSEEAVEKHVFSANTMCYKCVVCGKVCEDSGVMRLHMSRFHGGAHLNNFLFWCRTCKKELVKKDAIMAHITEFHSGHRYFYEMDEVEEEEEEAMPSSSVESHLNTDKPPSPIAVVDHCPANSPPRGRWQCRICEDMFESQECVKQHCMSLTSHRFHRYSCAHCRKTFHKVETLYRHCQDEHDSEIMMKYFCGLCDLIFNKEEEFLSHYKEHHSIDYVFVSEKTKTSIKTEGDFKIVETSSLLSCGCHESYMCKINRKEDYDRCLPVLLEKGRLWFRCSSCSATAQNVTDINTHVCQVHRKEKSEEEQQYVIKCGICTKAFQNTESAQQHFHRKHAALQKPTATPGGANRSSTCQLAASASHAEKNLKQPSSQKHSDVEKGAEHDVRCQNIEEEVELPDVDYLRTMTHIVFVDFDNWSNFFGHLPGHLNQGTFIWGFQGGNTNWKPPLSCKVYNYLSRIGCFFLHPRCSKRKDAADFAICMHAGRLDEQLPKQIPFTILSGDQGFLELENQFKKTQRPAHILNPHHLEGDMMCALLNSISDTTKECDSDDSSGMKGSPAEELRATEDVELEEAIRRSLEEM.

Residues 1-39 (MGDPGPEIIESVPPAGPEASESTTDENEDDIQFVSEGPL) form a disordered region. A sufficient for E3 SUMO-protein ligase activity region spans residues 1-246 (MGDPGPEIIE…AADGHSNSLL (246 aa)). The interval 1 to 344 (MGDPGPEIIE…RVRCQNAGPV (344 aa)) is important for interaction with SUMO1 and SUMO2. The interval 30 to 37 (DIQFVSEG) is interaction with SUMO2 1. Residues 38–41 (PLRP) carry the PLRP motif. The interval 42–50 (VLEYIDLVS) is interaction with SUMO2 2. Glycyl lysine isopeptide (Lys-Gly) (interchain with G-Cter in SUMO2) cross-links involve residues Lys-75, Lys-77, Lys-106, Lys-139, and Lys-153. The residue at position 155 (Ser-155) is a Phosphoserine. Arg-158 is subject to Omega-N-methylarginine. Residue Lys-167 forms a Glycyl lysine isopeptide (Lys-Gly) (interchain with G-Cter in SUMO2) linkage. The important for interaction with SMAD4 stretch occupies residues 168–521 (PILCPIMHCN…HMSRFHGGAH (354 aa)). Residues 169-195 (ILCPIMHCNKEFDNGHLLLGHLKRFDH) form a C2H2-type 1 zinc finger. A C2H2-type 2; degenerate zinc finger spans residues 212-234 (FACAVCYEHFVTQQQYKDHLLSR). The segment at 253–277 (YACPQCFLLFSTKDECLKHMSTKNH) adopts a C2H2-type 3 zinc-finger fold. Residues Lys-270, Lys-275, Lys-283, Lys-288, Lys-301, and Lys-309 each participate in a glycyl lysine isopeptide (Lys-Gly) (interchain with G-Cter in SUMO2) cross-link. The segment at 315–338 (VKCVACHQTLRSHMELTAHFRVRC) adopts a C2H2-type 4; atypical zinc-finger fold. The C2H2-type 5 zinc finger occupies 362 to 385 (GYCSDCNQVFMDVASTQSHKNSGH). A Glycyl lysine isopeptide (Lys-Gly) (interchain with G-Cter in SUMO2) cross-link involves residue Lys-420. A Phosphoserine modification is found at Ser-429. Lys-431 participates in a covalent cross-link: Glycyl lysine isopeptide (Lys-Gly) (interchain with G-Cter in SUMO2). 2 consecutive C2H2-type zinc fingers follow at residues 494 to 517 (YKCV…SRFH) and 527 to 550 (FWCR…TEFH). Glycyl lysine isopeptide (Lys-Gly) (interchain with G-Cter in SUMO2) cross-links involve residues Lys-539 and Lys-583. The C2H2-type 8; atypical zinc finger occupies 604–629 (WQCRICEDMFESQECVKQHCMSLTSH). 2 C2H2-type zinc fingers span residues 634-657 (YSCA…QDEH) and 665-688 (YFCG…KEHH). Lys-645 participates in a covalent cross-link: Glycyl lysine isopeptide (Lys-Gly) (interchain with G-Cter in SUMO2). Lys-704 participates in a covalent cross-link: Glycyl lysine isopeptide (Lys-Gly) (interchain with G-Cter in SUMO1); alternate. Lys-704 is covalently cross-linked (Glycyl lysine isopeptide (Lys-Gly) (interchain with G-Cter in SUMO2); alternate). Glycyl lysine isopeptide (Lys-Gly) (interchain with G-Cter in SUMO2) cross-links involve residues Lys-729 and Lys-746. 2 C2H2-type zinc fingers span residues 751–774 (FRCS…CQVH) and 787–810 (IKCG…HRKH). Glycyl lysine isopeptide (Lys-Gly) (interchain with G-Cter in SUMO2) cross-links involve residues Lys-788, Lys-815, Lys-843, Lys-849, Lys-947, Lys-988, and Lys-989. Disordered stretches follow at residues 806–830 (FHRK…STCQ) and 839–858 (EKNL…KGAE). Basic and acidic residues predominate over residues 849–858 (KHSDVEKGAE). The tract at residues 1019 to 1045 (KECDSDDSSGMKGSPAEELRATEDVEL) is disordered. The span at 1033 to 1045 (PAEELRATEDVEL) shows a compositional bias: basic and acidic residues. The interval 1045–1056 (LEEAIRRSLEEM) is important for ubiquitin binding.

Belongs to the krueppel C2H2-type zinc-finger protein family. Homooligomer. Interacts (via N-terminal region) with SUMO1. Interacts (via N-terminal region) with SUMO2. Interacts simultaneously with two SUMO2 chains. Identified in a complex with SUMO2 and UBE2I/UBC9, where one ZNF451 interacts with one UBE2I/UBC9 and two SUMO2 chains, one bound to the UBE2I/UBC9 active site and the other to another region of the same UBE2I/UBC9 molecule. Interacts (via C-terminus) with ubiquitin. Interacts (via N-terminal zinc-finger domains) with SMAD4 (via MH2 domain). Interacts with SMAD2 and SMAD3. Identified in a complex that contains at least ZNF451, SMAD2, SMAD3 and SMAD4. Interacts with EP300. Inhibits interaction between EP300 and the SMAD4 complex. Interacts with SIMC1. Sumoylated. Predominantly sumoylated on the N-terminal region that is important for interaction with SUMO1 and SUMO2. Sumoylation is important for localization in nuclear granules; desumoylation leads to diffuse nucleoplasmic location. Autosumoylated (in vitro). Sumoylation enhances E3 SUMO-protein ligase activity.

Its subcellular location is the nucleus. The protein resides in the PML body. It localises to the nucleoplasm. It functions in the pathway protein modification; protein sumoylation. In terms of biological role, E3 SUMO-protein ligase; has a preference for SUMO2 and SUMO3 and facilitates UBE2I/UBC9-mediated sumoylation of target proteins. Plays a role in protein SUMO2 modification in response to stress caused by DNA damage and by proteasome inhibitors (in vitro). Required for MCM4 sumoylation. Has no activity with SUMO1. Preferentially transfers an additional SUMO2 chain onto the SUMO2 consensus site 'Lys-11'. Negatively regulates transcriptional activation mediated by the SMAD4 complex in response to TGF-beta signaling. Inhibits EP300-mediated acetylation of histone H3 at 'Lys-9'. Plays a role in regulating the transcription of AR targets. This chain is E3 SUMO-protein ligase ZNF451 (Znf451), found in Mus musculus (Mouse).